A 922-amino-acid chain; its full sequence is Phosphoenolpyruvate carboxylase (922 aa).

Positions 1 to 20 are disordered; it reads MTKTLHARPSAATDTTFAPP. Active-site residues include His-142 and Lys-581.

It belongs to the PEPCase type 1 family. Mg(2+) serves as cofactor.

It catalyses the reaction oxaloacetate + phosphate = phosphoenolpyruvate + hydrogencarbonate. Forms oxaloacetate, a four-carbon dicarboxylic acid source for the tricarboxylic acid cycle. The chain is Phosphoenolpyruvate carboxylase (ppc) from Methylorubrum extorquens (strain ATCC 14718 / DSM 1338 / JCM 2805 / NCIMB 9133 / AM1) (Methylobacterium extorquens).